Consider the following 197-residue polypeptide: Holliday junction branch migration complex subunit RuvA (197 aa).

Positions 1–63 (MFEYLNGKLV…EDAHSLYGFV (63 aa)) are domain I. A domain II region spans residues 64–142 (NESEKALFLR…ATGAVGISLL (79 aa)). Residues 142 to 146 (LDAAP) are flexible linker. The segment at 147–197 (ASNLALEEAIEALQALGYKATELKKIEKKLAQEAGLTSEEYIKSALKLMMK) is domain III.

Belongs to the RuvA family. Homotetramer. Forms an RuvA(8)-RuvB(12)-Holliday junction (HJ) complex. HJ DNA is sandwiched between 2 RuvA tetramers; dsDNA enters through RuvA and exits via RuvB. An RuvB hexamer assembles on each DNA strand where it exits the tetramer. Each RuvB hexamer is contacted by two RuvA subunits (via domain III) on 2 adjacent RuvB subunits; this complex drives branch migration. In the full resolvosome a probable DNA-RuvA(4)-RuvB(12)-RuvC(2) complex forms which resolves the HJ.

Its subcellular location is the cytoplasm. Functionally, the RuvA-RuvB-RuvC complex processes Holliday junction (HJ) DNA during genetic recombination and DNA repair, while the RuvA-RuvB complex plays an important role in the rescue of blocked DNA replication forks via replication fork reversal (RFR). RuvA specifically binds to HJ cruciform DNA, conferring on it an open structure. The RuvB hexamer acts as an ATP-dependent pump, pulling dsDNA into and through the RuvAB complex. HJ branch migration allows RuvC to scan DNA until it finds its consensus sequence, where it cleaves and resolves the cruciform DNA. This chain is Holliday junction branch migration complex subunit RuvA, found in Lactococcus lactis subsp. cremoris (strain MG1363).